The primary structure comprises 467 residues: ATP-dependent protease ATPase subunit HslU (467 aa).

ATP-binding positions include Val-22 and 64-69 (GVGKTE). Residues 166 to 185 (GQNQDEEEEPPTEEIKTKRS) form a disordered region. ATP-binding residues include Asp-280, Glu-345, and Arg-417.

Belongs to the ClpX chaperone family. HslU subfamily. In terms of assembly, a double ring-shaped homohexamer of HslV is capped on each side by a ring-shaped HslU homohexamer. The assembly of the HslU/HslV complex is dependent on binding of ATP.

The protein localises to the cytoplasm. In terms of biological role, ATPase subunit of a proteasome-like degradation complex; this subunit has chaperone activity. The binding of ATP and its subsequent hydrolysis by HslU are essential for unfolding of protein substrates subsequently hydrolyzed by HslV. HslU recognizes the N-terminal part of its protein substrates and unfolds these before they are guided to HslV for hydrolysis. This Staphylococcus epidermidis (strain ATCC 35984 / DSM 28319 / BCRC 17069 / CCUG 31568 / BM 3577 / RP62A) protein is ATP-dependent protease ATPase subunit HslU.